We begin with the raw amino-acid sequence, 341 residues long: GTPase Obg (341 aa).

An Obg domain is found at 2–160 (SGFIDEVPIQ…FSLILELKLL (159 aa)). The 170-residue stretch at 161-330 (ADIGIVGLPN…LLERIDKVFF (170 aa)) folds into the OBG-type G domain. Residues 167–174 (GLPNAGKS), 192–196 (FTTLS), 215–218 (DIPG), 282–285 (NKMD), and 311–313 (SAD) contribute to the GTP site. Mg(2+) is bound by residues serine 174 and threonine 194.

The protein belongs to the TRAFAC class OBG-HflX-like GTPase superfamily. OBG GTPase family. In terms of assembly, monomer. Mg(2+) serves as cofactor.

It localises to the cytoplasm. An essential GTPase which binds GTP, GDP and possibly (p)ppGpp with moderate affinity, with high nucleotide exchange rates and a fairly low GTP hydrolysis rate. Plays a role in control of the cell cycle, stress response, ribosome biogenesis and in those bacteria that undergo differentiation, in morphogenesis control. This Leptospira biflexa serovar Patoc (strain Patoc 1 / Ames) protein is GTPase Obg.